A 280-amino-acid polypeptide reads, in one-letter code: Diaminopimelate epimerase (280 aa).

Substrate is bound by residues Asn14 and Asn67. Cys76 serves as the catalytic Proton donor. Substrate-binding positions include 77–78 (GN), Asn193, and 210–211 (ER). The active-site Proton acceptor is Cys220. 221-222 (GT) lines the substrate pocket.

The protein belongs to the diaminopimelate epimerase family. Homodimer.

It is found in the cytoplasm. The catalysed reaction is (2S,6S)-2,6-diaminopimelate = meso-2,6-diaminopimelate. It functions in the pathway amino-acid biosynthesis; L-lysine biosynthesis via DAP pathway; DL-2,6-diaminopimelate from LL-2,6-diaminopimelate: step 1/1. Catalyzes the stereoinversion of LL-2,6-diaminopimelate (L,L-DAP) to meso-diaminopimelate (meso-DAP), a precursor of L-lysine. This Methanocella arvoryzae (strain DSM 22066 / NBRC 105507 / MRE50) protein is Diaminopimelate epimerase.